A 181-amino-acid chain; its full sequence is LEM domain-containing protein 1 (181 aa).

In terms of domain architecture, LEM spans 1–45 (MVDVKCLSDCKLQNQLEKLGFSPGPILPSTRKLYEKKLVQLLVSP). Residues 152 to 172 (FPVGLKLAVLGIFIIVVFVYL) form a helical; Signal-anchor for type II membrane protein membrane-spanning segment.

Testis-specific. Isoform 6 is detected in 17 of 18 colon cancer tissues examined.

The protein localises to the membrane. The polypeptide is LEM domain-containing protein 1 (LEMD1) (Homo sapiens (Human)).